The following is a 142-amino-acid chain: SPbeta prophage-derived deoxyuridine 5'-triphosphate nucleotidohydrolase YosS (142 aa).

Residues serine 62 and asparagine 74 each coordinate dUMP. Aspartate 80 functions as the Proton acceptor in the catalytic mechanism. DUMP is bound by residues tyrosine 83 and phenylalanine 91.

The protein belongs to the dUTPase family. In terms of assembly, homotrimer. Mg(2+) serves as cofactor.

It carries out the reaction dUTP + H2O = dUMP + diphosphate + H(+). Its pathway is pyrimidine metabolism; dUMP biosynthesis; dUMP from dCTP (dUTP route): step 2/2. Involved in nucleotide metabolism: produces dUMP, the immediate precursor of thymidine nucleotides and decreases the intracellular concentration of dUTP, so that uracil cannot be incorporated into DNA. The Ser-62 side chain changes its position upon ligand-binding to make contacts with the nucleotide phosphates. This is SPbeta prophage-derived deoxyuridine 5'-triphosphate nucleotidohydrolase YosS from Bacillus subtilis (strain 168).